The primary structure comprises 154 residues: NADPH-dependent 7-cyano-7-deazaguanine reductase (154 aa).

The segment at 1–24 (MPKTDVSGLSQLGTKVDLPQSPEE) is disordered. The active-site Thioimide intermediate is the Cys52. The Proton donor role is filled by Asp59. Residues 74–76 (VES) and 93–94 (HE) contribute to the substrate site.

This sequence belongs to the GTP cyclohydrolase I family. QueF type 1 subfamily.

The protein resides in the cytoplasm. It catalyses the reaction 7-aminomethyl-7-carbaguanine + 2 NADP(+) = 7-cyano-7-deazaguanine + 2 NADPH + 3 H(+). Its pathway is tRNA modification; tRNA-queuosine biosynthesis. Functionally, catalyzes the NADPH-dependent reduction of 7-cyano-7-deazaguanine (preQ0) to 7-aminomethyl-7-deazaguanine (preQ1). In Sinorhizobium fredii (strain NBRC 101917 / NGR234), this protein is NADPH-dependent 7-cyano-7-deazaguanine reductase.